A 103-amino-acid polypeptide reads, in one-letter code: Small ribosomal subunit protein uS10 (103 aa).

It belongs to the universal ribosomal protein uS10 family. In terms of assembly, part of the 30S ribosomal subunit.

Its function is as follows. Involved in the binding of tRNA to the ribosomes. The sequence is that of Small ribosomal subunit protein uS10 from Azoarcus sp. (strain BH72).